We begin with the raw amino-acid sequence, 90 residues long: Probable Fe(2+)-trafficking protein (90 aa).

The protein belongs to the Fe(2+)-trafficking protein family.

Could be a mediator in iron transactions between iron acquisition and iron-requiring processes, such as synthesis and/or repair of Fe-S clusters in biosynthetic enzymes. The chain is Probable Fe(2+)-trafficking protein from Polaromonas sp. (strain JS666 / ATCC BAA-500).